A 258-amino-acid chain; its full sequence is uncharacterized protein (258 aa).

The signal sequence occupies residues 1–23 (MVWCHYILLVLTFFLFTTFFTAA). Topologically, residues 24–64 (CPAIFTWLNSLFRLSNDSPHVVHTSIAEVGDIEDGRVDKDG) are cytoplasmic. The chain crosses the membrane as a helical span at residues 65–85 (VLFVDLEFFLGCLPFFFFALV). At 86 to 123 (DQSSSSSVCKPLSPSDAKRSSNSLLRLSLVSSNDSDSS) the chain is on the extracellular side. An N-linked (GlcNAc...) asparagine glycan is attached at asparagine 118. Residues 124–144 (VSVSTFAFFFFFLFFLFFVFT) traverse the membrane as a helical segment. Over 145–230 (CTFSSELTSS…SSSISFRISS (86 aa)) the chain is Cytoplasmic. Residues 231-251 (IFFLCSLVFMWFFNCFSDLNV) traverse the membrane as a helical segment. The Extracellular segment spans residues 252–258 (LLQIKHS).

The protein resides in the membrane. This is an uncharacterized protein from Saccharomyces cerevisiae (strain ATCC 204508 / S288c) (Baker's yeast).